The chain runs to 876 residues: Alanine--tRNA ligase (876 aa).

The Zn(2+) site is built by His-565, His-569, Cys-667, and His-671.

It belongs to the class-II aminoacyl-tRNA synthetase family. Zn(2+) is required as a cofactor.

It localises to the cytoplasm. It carries out the reaction tRNA(Ala) + L-alanine + ATP = L-alanyl-tRNA(Ala) + AMP + diphosphate. Its function is as follows. Catalyzes the attachment of alanine to tRNA(Ala) in a two-step reaction: alanine is first activated by ATP to form Ala-AMP and then transferred to the acceptor end of tRNA(Ala). Also edits incorrectly charged Ser-tRNA(Ala) and Gly-tRNA(Ala) via its editing domain. The chain is Alanine--tRNA ligase from Staphylococcus aureus (strain MRSA252).